The sequence spans 561 residues: Arginine--tRNA ligase (561 aa).

The short motif at 128–138 (ANPTGPLHVGH) is the 'HIGH' region element.

It belongs to the class-I aminoacyl-tRNA synthetase family. Monomer.

The protein resides in the cytoplasm. The enzyme catalyses tRNA(Arg) + L-arginine + ATP = L-arginyl-tRNA(Arg) + AMP + diphosphate. The protein is Arginine--tRNA ligase of Chromohalobacter salexigens (strain ATCC BAA-138 / DSM 3043 / CIP 106854 / NCIMB 13768 / 1H11).